A 139-amino-acid chain; its full sequence is uncharacterized protein (139 aa).

The protein localises to the mitochondrion. This is an uncharacterized protein from Marchantia polymorpha (Common liverwort).